The sequence spans 199 residues: Putative ATP-dependent Clp protease proteolytic subunit-like (199 aa).

This sequence belongs to the peptidase S14 family. In terms of assembly, component of the chloroplastic Clp protease core complex.

It is found in the plastid. Its subcellular location is the cyanelle. Functionally, has lost the two conserved residues (Ser and His) proposed to be part of the active site. Therefore it could be inactive. This chain is Putative ATP-dependent Clp protease proteolytic subunit-like (clpP-B), found in Cyanophora paradoxa.